A 294-amino-acid chain; its full sequence is NADH-cytochrome b5 reductase 1 (294 aa).

Residues 18-38 (PFIVFATVATIISAFIGYYFL) form a helical membrane-spanning segment. Residues 51 to 154 (DEFQKFPLIE…RGPKGFFTYT (104 aa)) enclose the FAD-binding FR-type domain. Residues 134–149 (AGKN…GPKG) and 160–192 (SFGM…KIHL) each bind FAD.

It belongs to the flavoprotein pyridine nucleotide cytochrome reductase family. In terms of assembly, monomer. Component of the 2-(3-amino-3-carboxypropyl)histidine synthase complex composed of DPH1, DPH2, DPH3 and a NADH-dependent reductase, predominantly CBR1. FAD serves as cofactor.

It localises to the mitochondrion outer membrane. The catalysed reaction is 2 Fe(III)-[cytochrome b5] + NADH = 2 Fe(II)-[cytochrome b5] + NAD(+) + H(+). The enzyme catalyses 2 Fe(3+)-[Dph3] + NADH = 2 Fe(2+)-[Dph3] + NAD(+) + H(+). It functions in the pathway protein modification; peptidyl-diphthamide biosynthesis. NADH-dependent reductase for DPH3 and cytochrome b5. Required for the first step of diphthamide biosynthesis, a post-translational modification of histidine which occurs in elongation factor 2. DPH1 and DPH2 transfer a 3-amino-3-carboxypropyl (ACP) group from S-adenosyl-L-methionine (SAM) to a histidine residue, the reaction is assisted by a reduction system comprising DPH3 and a NADH-dependent reductase, predominantly CBR1. By reducing DPH3, also involved in the formation of the tRNA wobble base modification mcm5s 2U (5-methoxycarbonylmethyl-2-thiouridine), mediated by the elongator complex. The cytochrome b5/NADH cytochrome b5 reductase electron transfer system supports the catalytic activity of several sterol biosynthetic enzymes. This Candida albicans (strain SC5314 / ATCC MYA-2876) (Yeast) protein is NADH-cytochrome b5 reductase 1 (CBR1).